The primary structure comprises 324 residues: Rho crystallin (324 aa).

N-acetylthreonine is present on T2. NADP(+) is bound at residue 218 to 281 (SVLGSHRDRN…SFTPARIKQN (64 aa)).

It belongs to the aldo/keto reductase family. Monomer.

The sequence is that of Rho crystallin from Aquarana catesbeiana (American bullfrog).